The following is a 494-amino-acid chain: Probable cytosol aminopeptidase (494 aa).

2 residues coordinate Mn(2+): Lys260 and Asp265. The active site involves Lys272. Mn(2+) contacts are provided by Asp283, Asp342, and Glu344. Arg346 is an active-site residue.

Belongs to the peptidase M17 family. Mn(2+) serves as cofactor.

The protein resides in the cytoplasm. It carries out the reaction Release of an N-terminal amino acid, Xaa-|-Yaa-, in which Xaa is preferably Leu, but may be other amino acids including Pro although not Arg or Lys, and Yaa may be Pro. Amino acid amides and methyl esters are also readily hydrolyzed, but rates on arylamides are exceedingly low.. It catalyses the reaction Release of an N-terminal amino acid, preferentially leucine, but not glutamic or aspartic acids.. In terms of biological role, presumably involved in the processing and regular turnover of intracellular proteins. Catalyzes the removal of unsubstituted N-terminal amino acids from various peptides. This is Probable cytosol aminopeptidase from Bacillus cereus (strain ATCC 10987 / NRS 248).